Consider the following 180-residue polypeptide: CASP-like protein 2A3 (180 aa).

Residues 1–13 (MELIYGSTMRKKW) lie on the Cytoplasmic side of the membrane. The helical transmembrane segment at 14-34 (IEPALRFLPVGLCISALALML) threads the bilayer. The Extracellular portion of the chain corresponds to 35–55 (KSKEGNENGILEYKHVGAFRY). Residues 56-76 (LAYANGICAAYSVLSTFNSVV) form a helical membrane-spanning segment. The Cytoplasmic segment spans residues 77–85 (PRSCSLSRA). Residues 86 to 106 (WFVFVFDQAFTYLMLGAGAVV) traverse the membrane as a helical segment. Residues 107–135 (TEVLYLAYKGDEKITWFEICPYYGRFCNR) lie on the Extracellular side of the membrane. A helical membrane pass occupies residues 136 to 156 (VAASLVISFLALLCFIPLSLI). At 157–180 (SAYRVFSKYDPPSLCKKDQITSQS) the chain is on the cytoplasmic side.

Belongs to the Casparian strip membrane proteins (CASP) family. In terms of assembly, homodimer and heterodimers.

Its subcellular location is the cell membrane. The polypeptide is CASP-like protein 2A3 (Picea sitchensis (Sitka spruce)).